A 492-amino-acid polypeptide reads, in one-letter code: Sestrin-1 (492 aa).

Positions 71–252 (FADSFAALGR…ICDITNGNHS (182 aa)) are N-terminal domain; may mediate the alkylhydroperoxide reductase activity. Cys130 acts as the Cysteine sulfenic acid (-SOH) intermediate in catalysis. 2 positions are modified to phosphoserine: Ser293 and Ser314. Residues 321-492 (PARDVSRHFE…ALRAITRYMT (172 aa)) are C-terminal domain; mediates TORC1 regulation. L-leucine is bound by residues 386–389 (TYNT), Thr398, and Glu463.

Belongs to the sestrin family. Interacts with the GATOR2 complex which is composed of MIOS, SEC13, SEH1L, WDR24 and WDR59; the interaction is negatively regulated by leucine. Interacts with RRAGA, RRAGB, RRAGC and RRAGD; may function as a guanine nucleotide dissociation inhibitor for RRAGs and regulate them. Interacts with KEAP1, RBX1 and SQSTM1; in the SQSTM1-dependent autophagic degradation of KEAP1. May interact with PRDX1. In terms of tissue distribution, highly expressed in heart and also detected in liver and skeletal muscles (at protein level).

It is found in the nucleus. The protein localises to the cytoplasm. The catalysed reaction is a hydroperoxide + L-cysteinyl-[protein] = S-hydroxy-L-cysteinyl-[protein] + an alcohol. Functions as an intracellular leucine sensor that negatively regulates the TORC1 signaling pathway through the GATOR complex. In absence of leucine, binds the GATOR subcomplex GATOR2 and prevents TORC1 signaling. Binding of leucine to SESN2 disrupts its interaction with GATOR2 thereby activating the TORC1 signaling pathway. This stress-inducible metabolic regulator may also play a role in protection against oxidative and genotoxic stresses. May positively regulate the transcription by NFE2L2 of genes involved in the response to oxidative stress by facilitating the SQSTM1-mediated autophagic degradation of KEAP1. Moreover, may prevent the accumulation of reactive oxygen species (ROS) through the alkylhydroperoxide reductase activity born by the N-terminal domain of the protein. Was originally reported to contribute to oxidative stress resistance by reducing PRDX1. However, this could not be confirmed. In Mus musculus (Mouse), this protein is Sestrin-1.